A 430-amino-acid chain; its full sequence is Adenylosuccinate synthetase (430 aa).

Residues 12-18 and 40-42 each bind GTP; these read GDEGKGK and GHT. Aspartate 13 acts as the Proton acceptor in catalysis. Mg(2+)-binding residues include aspartate 13 and glycine 40. Residues 13–16, 38–41, threonine 130, arginine 144, glutamine 224, threonine 239, and arginine 303 contribute to the IMP site; these read DEGK and NAGH. Residue histidine 41 is the Proton donor of the active site. Substrate is bound at residue 299–305; sequence TVTGRKR. Residues arginine 305, 331–333, and 413–415 each bind GTP; these read KLD and STS.

Belongs to the adenylosuccinate synthetase family. Homodimer. It depends on Mg(2+) as a cofactor.

It is found in the cytoplasm. It catalyses the reaction IMP + L-aspartate + GTP = N(6)-(1,2-dicarboxyethyl)-AMP + GDP + phosphate + 2 H(+). The protein operates within purine metabolism; AMP biosynthesis via de novo pathway; AMP from IMP: step 1/2. In terms of biological role, plays an important role in the de novo pathway of purine nucleotide biosynthesis. Catalyzes the first committed step in the biosynthesis of AMP from IMP. This is Adenylosuccinate synthetase from Methylorubrum extorquens (strain CM4 / NCIMB 13688) (Methylobacterium extorquens).